The primary structure comprises 482 residues: Glutamyl-tRNA(Gln) amidotransferase subunit A (482 aa).

Residues K74 and S149 each act as charge relay system in the active site. Residue S173 is the Acyl-ester intermediate of the active site.

Belongs to the amidase family. GatA subfamily. Heterotrimer of A, B and C subunits.

The enzyme catalyses L-glutamyl-tRNA(Gln) + L-glutamine + ATP + H2O = L-glutaminyl-tRNA(Gln) + L-glutamate + ADP + phosphate + H(+). Allows the formation of correctly charged Gln-tRNA(Gln) through the transamidation of misacylated Glu-tRNA(Gln) in organisms which lack glutaminyl-tRNA synthetase. The reaction takes place in the presence of glutamine and ATP through an activated gamma-phospho-Glu-tRNA(Gln). The sequence is that of Glutamyl-tRNA(Gln) amidotransferase subunit A from Prochlorococcus marinus (strain AS9601).